A 393-amino-acid polypeptide reads, in one-letter code: Protein TsgA (393 aa).

Helical transmembrane passes span 11–31 (WISF…GMVM), 51–71 (FLNA…EIVP), 78–98 (FGFI…SLAL), 101–121 (AAMF…TFLI), 134–154 (LLFT…VAAF), 162–182 (WYWV…LTFG), 206–226 (IGVL…LGFI), 245–265 (ALVS…SFIL), 273–293 (ILTV…TGTQ), 298–318 (WFIL…ITLG), 332–352 (FILT…GPIV), and 361–381 (LLTA…LGFV).

The protein belongs to the major facilitator superfamily. TsgA family.

It localises to the cell inner membrane. The polypeptide is Protein TsgA (Salmonella arizonae (strain ATCC BAA-731 / CDC346-86 / RSK2980)).